Consider the following 131-residue polypeptide: Guanyl-specific ribonuclease F1 (131 aa).

A signal peptide spans 1-25; the sequence is MLFFKSIASLAALVSLAVASPIESR. Position 26 is a pyrrolidone carboxylic acid (glutamine 26). 2 cysteine pairs are disulfide-bonded: cysteine 31-cysteine 127 and cysteine 49-cysteine 108. Histidine 65 is a catalytic residue. Glutamate 83 serves as the catalytic Proton acceptor. The active-site Proton donor is histidine 116.

It belongs to the ribonuclease N1/T1 family.

The enzyme catalyses [RNA] containing guanosine + H2O = an [RNA fragment]-3'-guanosine-3'-phosphate + a 5'-hydroxy-ribonucleotide-3'-[RNA fragment].. The polypeptide is Guanyl-specific ribonuclease F1 (Fusarium fujikuroi (Bakanae and foot rot disease fungus)).